Consider the following 1876-residue polypeptide: Phenolphthiocerol/phthiocerol polyketide synthase subunit A (1876 aa).

Thr2 is subject to N-acetylthreonine. The Carrier 1 domain maps to 9–83; sequence ADLRHWLIDY…ALAAYLAAPE (75 aa). Position 43 is an O-(pantetheine 4'-phosphoryl)serine (Ser43). Residues 101-526 form the Ketosynthase family 3 (KS3) domain; sequence DEPIAVVGMG…GTNAHVVIEQ (426 aa). Active-site for beta-ketoacyl synthase activity residues include Cys273, His408, and His448. An acyltransferase region spans residues 626–950; sequence SPGPGTVFVY…NLNKAHTIHP (325 aa). Catalysis depends on Ser720, which acts as the For malonyltransferase activity. Residues 997–1112 form an N-terminal hotdog fold region; it reads HTTVATVSAS…AQLSSSPSDS (116 aa). The PKS/mFAS DH domain maps to 997–1267; the sequence is HTTVATVSAS…YRALDFGLDV (271 aa). His1027 (proton acceptor; for dehydratase activity) is an active-site residue. Positions 1102 to 1130 are disordered; sequence TAQLSSSPSDSASSLNEHHRANGQPPERA. A compositionally biased stretch (low complexity) spans 1106–1115; the sequence is SSSPSDSASS. The C-terminal hotdog fold stretch occupies residues 1130–1267; it reads AHRDLIPDLA…YRALDFGLDV (138 aa). Asp1186 (proton donor; for dehydratase activity) is an active-site residue. 1491–1551 provides a ligand contact to NADP(+); the sequence is AAYLITGGLG…RRRIDAIRAL (61 aa). Positions 1491 to 1728 are beta-ketoacyl reductase; the sequence is AAYLITGGLG…DGYDVAQAVV (238 aa). A Carrier 2 domain is found at 1759 to 1836; the sequence is EVRSELEQGL…SLASYLAKRV (78 aa). Ser1796 carries the post-translational modification O-(pantetheine 4'-phosphoryl)serine.

Requires NADP(+) as cofactor. It depends on pantetheine 4'-phosphate as a cofactor.

The enzyme catalyses icosanoyl-[(phenol)carboxyphthiodiolenone synthase] + 2 (S)-methylmalonyl-CoA + 3 malonyl-CoA + 5 NADPH + 10 H(+) = C32-carboxyphthiodiolenone-[(phenol)carboxyphthiodiolenone synthase] + 5 CO2 + 5 NADP(+) + 5 CoA + 2 H2O. The catalysed reaction is docosanoyl-[(phenol)carboxyphthiodiolenone synthase] + 2 (S)-methylmalonyl-CoA + 3 malonyl-CoA + 5 NADPH + 10 H(+) = C34-carboxyphthiodiolenone-[(phenol)carboxyphthiodiolenone synthase] + 5 CO2 + 5 NADP(+) + 5 CoA + 2 H2O. It carries out the reaction 17-(4-hydroxyphenyl)heptadecanoyl-[(phenol)carboxyphthiodiolenone synthase] + 2 (S)-methylmalonyl-CoA + 3 malonyl-CoA + 5 NADPH + 10 H(+) = C35-(phenol)carboxyphthiodiolenone-[(phenol)carboxyphthiodiolenone synthase] + 5 CO2 + 5 NADP(+) + 5 CoA + 2 H2O. It catalyses the reaction 19-(4-hydroxyphenyl)nonadecanoyl-[(phenol)carboxyphthiodiolenone synthase] + 2 (S)-methylmalonyl-CoA + 3 malonyl-CoA + 5 NADPH + 10 H(+) = C37-(phenol)carboxyphthiodiolenone-[(phenol)carboxyphthiodiolenone synthase] + 5 CO2 + 5 NADP(+) + 5 CoA + 2 H2O. It participates in lipid metabolism; fatty acid biosynthesis. Its function is as follows. Part of the PpsABCDE complex involved in the biosynthesis of the lipid core common to phthiocerols and phenolphthiocerols by successive additions of malonyl-CoA or methylmalonyl-CoA extender units. PpsA can accept as substrate the activated forms of either icosanoyl (C20), docosanoyl (C22) or lignoceroyl (C24) groups from FadD26, or a (4-hydroxyphenyl)-C17 or (4-hydroxyphenyl)-C19 fatty acyl from FadD29. PpsA initiates the biosynthesis and extends its substrate using a malonyl-CoA extender unit. The PpsB and PpsC proteins add the second and third malonyl-CoA extender units. PpsD adds an (R)-methylmalonyl unit and PpsE adds a second (R)-methylmalonyl unit. The incorporation of the methylmalonyl units results in formation of two branched methyl groups in the elongated product. This is Phenolphthiocerol/phthiocerol polyketide synthase subunit A (ppsA) from Mycobacterium tuberculosis (strain ATCC 25618 / H37Rv).